Reading from the N-terminus, the 642-residue chain is Threonine--tRNA ligase (642 aa).

Residues 1-61 (MIKVTFPDGN…EHDGKLQLLT (61 aa)) enclose the TGS domain. The interval 240–539 (DHRKIGKDLD…LIEEYKGSFP (300 aa)) is catalytic. Zn(2+) is bound by residues Cys-334, His-385, and His-516.

It belongs to the class-II aminoacyl-tRNA synthetase family. Homodimer. Zn(2+) is required as a cofactor.

It is found in the cytoplasm. It carries out the reaction tRNA(Thr) + L-threonine + ATP = L-threonyl-tRNA(Thr) + AMP + diphosphate + H(+). Catalyzes the attachment of threonine to tRNA(Thr) in a two-step reaction: L-threonine is first activated by ATP to form Thr-AMP and then transferred to the acceptor end of tRNA(Thr). Also edits incorrectly charged L-seryl-tRNA(Thr). In Acholeplasma laidlawii (strain PG-8A), this protein is Threonine--tRNA ligase.